A 178-amino-acid polypeptide reads, in one-letter code: uncharacterized protein (178 aa).

An MSP domain is found at 52 to 177; the sequence is HIAIEDRAHQ…RRLPASFLST (126 aa).

This is an uncharacterized protein from Caenorhabditis elegans.